The primary structure comprises 494 residues: Chromosomal replication initiator protein DnaA (494 aa).

The domain I, interacts with DnaA modulators stretch occupies residues methionine 1–methionine 103. Residues methionine 103–serine 148 are domain II. The segment at proline 149–glutamine 371 is domain III, AAA+ region. Positions 195, 197, 198, and 199 each coordinate ATP. The domain IV, binds dsDNA stretch occupies residues serine 372–alanine 494.

The protein belongs to the DnaA family. As to quaternary structure, oligomerizes as a right-handed, spiral filament on DNA at oriC.

Its subcellular location is the cytoplasm. In terms of biological role, plays an essential role in the initiation and regulation of chromosomal replication. ATP-DnaA binds to the origin of replication (oriC) to initiate formation of the DNA replication initiation complex once per cell cycle. Binds the DnaA box (a 9 base pair repeat at the origin) and separates the double-stranded (ds)DNA. Forms a right-handed helical filament on oriC DNA; dsDNA binds to the exterior of the filament while single-stranded (ss)DNA is stabiized in the filament's interior. The ATP-DnaA-oriC complex binds and stabilizes one strand of the AT-rich DNA unwinding element (DUE), permitting loading of DNA polymerase. After initiation quickly degrades to an ADP-DnaA complex that is not apt for DNA replication. Binds acidic phospholipids. The sequence is that of Chromosomal replication initiator protein DnaA from Bartonella quintana (strain Toulouse) (Rochalimaea quintana).